We begin with the raw amino-acid sequence, 311 residues long: Mediator of RNA polymerase II transcription subunit 27 (311 aa).

This sequence belongs to the Mediator complex subunit 27 family. As to quaternary structure, component of the Mediator complex.

Its subcellular location is the nucleus. Its function is as follows. Component of the Mediator complex, a coactivator involved in the regulated transcription of nearly all RNA polymerase II-dependent genes. Mediator functions as a bridge to convey information from gene-specific regulatory proteins to the basal RNA polymerase II transcription machinery. Mediator is recruited to promoters by direct interactions with regulatory proteins and serves as a scaffold for the assembly of a functional preinitiation complex with RNA polymerase II and the general transcription factors. Required for the development of dopaminergic amacrine cells in the retina. May also negatively regulate the development of rod photoreceptor cells. The polypeptide is Mediator of RNA polymerase II transcription subunit 27 (med27) (Danio rerio (Zebrafish)).